The chain runs to 142 residues: UPF0310 protein PYRAB08750 (142 aa).

This sequence belongs to the UPF0310 family.

In Pyrococcus abyssi (strain GE5 / Orsay), this protein is UPF0310 protein PYRAB08750.